We begin with the raw amino-acid sequence, 1721 residues long: Latent-transforming growth factor beta-binding protein 1 (1721 aa).

The signal sequence occupies residues 1–23 (MAGAWLRWGLLLWAGLLASSAHG). Residues 64–81 (RSSAAAGAPSRASPGVPS) are compositionally biased toward low complexity. The disordered stretch occupies residues 64–158 (RSSAAAGAPS…SGGGSRLQVH (95 aa)). A compositionally biased stretch (pro residues) spans 99-111 (RPPPPPPPEPARP). Residues 112–130 (AVPGGQLHPNPGGHPAAAP) are compositionally biased toward low complexity. Residues 187–219 (TKPSCVPPCQNGGMCLRPQLCVCKPGTKGKACE) form the EGF-like 1 domain. Disulfide bonds link cysteine 191–cysteine 201, cysteine 195–cysteine 207, and cysteine 209–cysteine 218. Positions 228 to 259 (SPVFGGQSPGAASSWGPPEQAAKHTSSKKADT) are disordered. N-linked (GlcNAc...) asparagine glycans are attached at residues asparagine 347 and asparagine 378. Residues 399-431 (RVVICHLPCMNGGQCSSRDKCQCPPNFTGKLCQ) enclose the EGF-like 2 domain. 6 disulfides stabilise this stretch: cysteine 403/cysteine 413, cysteine 407/cysteine 419, cysteine 421/cysteine 430, cysteine 559/cysteine 581, cysteine 568/cysteine 594, and cysteine 582/cysteine 597. N-linked (GlcNAc...) asparagine glycosylation is present at asparagine 424. One can recognise a TB 1 domain in the interval 557–609 (GRCFQETIGSQCGKALPGLSKQEDCCGTVGTSWGFNKCQKCPKKPSYHGYNQM). Asparagine 620 carries N-linked (GlcNAc...) asparagine glycosylation. The EGF-like 3; calcium-binding domain maps to 626–663 (DINECQLQGVCPNGECLNTMGSYRCTCKIGFGPDPTFS). 7 disulfide bridges follow: cysteine 630-cysteine 641, cysteine 636-cysteine 650, cysteine 652-cysteine 665, cysteine 679-cysteine 702, cysteine 689-cysteine 714, cysteine 703-cysteine 717, and cysteine 704-cysteine 729. Serine 647 carries an O-linked (Glc) serine glycan. The 53-residue stretch at 677–729 (GPCYRLVSSGRQCMHPLSVHLTKQLCCCSVGKAWGPHCEKCPLPGTAAFKEIC) folds into the TB 2 domain. The disordered stretch occupies residues 750–811 (VGKGPVFVKP…APPEKEIPSL (62 aa)). O-linked (GalNAc...) threonine glycosylation is found at threonine 769 and threonine 801. The EGF-like 4; calcium-binding domain maps to 873–910 (EINECTVNPDICGAGHCINLPVRYTCICYEGYRFSEQQ). Intrachain disulfides connect cysteine 877-cysteine 889, cysteine 884-cysteine 898, cysteine 900-cysteine 913, cysteine 919-cysteine 931, cysteine 926-cysteine 940, cysteine 942-cysteine 955, cysteine 961-cysteine 972, cysteine 967-cysteine 981, cysteine 984-cysteine 996, cysteine 1002-cysteine 1013, cysteine 1008-cysteine 1022, cysteine 1025-cysteine 1036, cysteine 1042-cysteine 1053, cysteine 1048-cysteine 1062, cysteine 1064-cysteine 1077, cysteine 1083-cysteine 1094, cysteine 1089-cysteine 1103, cysteine 1105-cysteine 1118, cysteine 1124-cysteine 1135, cysteine 1130-cysteine 1144, cysteine 1146-cysteine 1159, cysteine 1165-cysteine 1177, cysteine 1172-cysteine 1186, cysteine 1188-cysteine 1200, cysteine 1206-cysteine 1218, cysteine 1212-cysteine 1227, cysteine 1229-cysteine 1242, cysteine 1248-cysteine 1260, and cysteine 1254-cysteine 1269. An EGF-like 5; calcium-binding domain is found at 915-956 (DIDECTQVQHLCSQGRCENTEGSFLCICPAGFMASEEGTNCI). Serine 937 is a glycosylation site (O-linked (Glc) serine). The 41-residue stretch at 957 to 997 (DVDECLRPDVCGEGHCVNTVGAFRCEYCDSGYRMTQRGRCE) folds into the EGF-like 6; calcium-binding domain. Residue asparagine 974 is modified to (3R)-3-hydroxyasparagine. The EGF-like 7; calcium-binding domain maps to 998-1037 (DIDECLNPSTCPDEQCVNSPGSYQCVPCTEGFRGWNGQCL). An O-linked (Glc) serine glycan is attached at serine 1019. One can recognise an EGF-like 8; calcium-binding domain in the interval 1038-1078 (DVDECLEPNVCANGDCSNLEGSYMCSCHKGYTRTPDHKHCR). The O-linked (Glc) serine glycan is linked to serine 1059. The EGF-like 9; calcium-binding domain occupies 1079–1119 (DIDECQQGNLCVNGQCKNTEGSFRCTCGQGYQLSAAKDQCE). The region spanning 1120 to 1160 (DIDECQHRHLCAHGQCRNTEGSFQCVCDQGYRASGLGDHCE) is the EGF-like 10; calcium-binding domain. The residue at position 1137 (asparagine 1137) is a (3R)-3-hydroxyasparagine. Residue serine 1141 is glycosylated (O-linked (Glc) serine). The EGF-like 11; calcium-binding domain occupies 1161–1201 (DINECLEDKSVCQRGDCINTAGSYDCTCPDGFQLDDNKTCQ). A Cell attachment site motif is present at residues 1174–1176 (RGD). N-linked (GlcNAc...) asparagine glycosylation occurs at asparagine 1197. The EGF-like 12; calcium-binding domain occupies 1202-1243 (DINECEHPGLCGPQGECLNTEGSFHCVCQQGFSISADGRTCE). Serine 1224 is a glycosylation site (O-linked (Glc) serine). An EGF-like 13; calcium-binding domain is found at 1244–1281 (DIDECVNNTVCDSHGFCDNTAGSFRCLCYQGFQAPQDG). Asparagine 1250 carries an N-linked (GlcNAc...) asparagine glycan. Positions 1286-1328 (DVNECELLSGVCGEAFCENVEGSFLCVCADENQEYSPMTGQCR) constitute an EGF-like 14; calcium-binding domain. Residues 1344-1411 (EEKKECYYNL…PKGKGFVPAG (68 aa)) are 8-Cys3 region. In terms of domain architecture, TB 3 spans 1347-1401 (KECYYNLNDASLCDNVLAPNVTKQECCCTSGVGWGDNCEIFPCPVLGTAEFTEMC). 4 disulfides stabilise this stretch: cysteine 1349–cysteine 1372, cysteine 1359–cysteine 1384, cysteine 1373–cysteine 1389, and cysteine 1374–cysteine 1401. N-linked (GlcNAc...) asparagine glycosylation is present at asparagine 1366. At serine 1414 the chain carries Phosphoserine; by FAM20C. The region spanning 1424-1466 (DADECLLFGQEICKNGFCLNTRPGYECYCKQGTYYDPVKLQCF) is the EGF-like 15; calcium-binding domain. In terms of domain architecture, EGF-like 16; calcium-binding spans 1467 to 1503 (DMDECQDPSSCIDGQCVNTEGSYNCFCTHPMVLDASE). 6 disulfide bridges follow: cysteine 1471–cysteine 1482, cysteine 1477–cysteine 1491, cysteine 1526–cysteine 1550, cysteine 1536–cysteine 1562, cysteine 1551–cysteine 1565, and cysteine 1552–cysteine 1577. The O-linked (Glc) serine glycan is linked to serine 1488. The C-terminal domain stretch occupies residues 1507–1721 (IRPAESNEQI…LNLEKDSDLE (215 aa)). The region spanning 1524 to 1577 (DLCWEHLSDEYVCSRPLVGKQTTYTECCCLYGEAWGMQCALCPLKDSDDYAQLC) is the TB 4 domain. Serine 1597 and serine 1616 each carry phosphoserine. The EGF-like 17 domain occupies 1621 to 1657 (QAEECGILNGCENGRCVRVQEGYTCDCFDGYHLDTAK). Disulfide bonds link cysteine 1625/cysteine 1636, cysteine 1631/cysteine 1645, cysteine 1666/cysteine 1681, cysteine 1676/cysteine 1690, and cysteine 1692/cysteine 1705. Residues 1662 to 1706 (DVNECDELNNRMSLCKNAKCINTDGSYKCLCLPGYVPSDKPNYCT) form the EGF-like 18; calcium-binding domain. Serine 1687 carries O-linked (Glc) serine glycosylation.

Belongs to the LTBP family. In terms of assembly, interacts with TGFB1; associates via disulfide bonds with the Latency-associated peptide chain (LAP) regulatory chain of TGFB1, leading to regulate activation of TGF-beta-1. LTBP1 does not bind directly to TGF-beta-1, the active chain of TGFB1. Interacts (via C-terminal domain) with FBN1 (via N-terminal domain). Interacts with FBN2. Interacts with ADAMTSL2. Interacts with EFEMP2. In terms of processing, contains hydroxylated asparagine residues. Post-translationally, isoform Short N-terminus is blocked. Two intrachain disulfide bonds from the TB3 domain are rearranged upon TGFB1 binding, and form interchain bonds with TGFB1 propeptide, anchoring it to the extracellular matrix. In terms of processing, O-glycosylated on serine residues by POGLUT2 and POGLUT3. Expressed in the aorta (at protein level). Isoform Long: Expressed in fibroblasts.

Its subcellular location is the secreted. It localises to the extracellular space. It is found in the extracellular matrix. Key regulator of transforming growth factor beta (TGFB1, TGFB2 and TGFB3) that controls TGF-beta activation by maintaining it in a latent state during storage in extracellular space. Associates specifically via disulfide bonds with the Latency-associated peptide (LAP), which is the regulatory chain of TGF-beta, and regulates integrin-dependent activation of TGF-beta. Outcompeted by LRRC32/GARP for binding to LAP regulatory chain of TGF-beta. In Homo sapiens (Human), this protein is Latent-transforming growth factor beta-binding protein 1.